A 232-amino-acid chain; its full sequence is Early E1A protein (232 aa).

The segment at 40–48 (PTLHDLFDV) is interaction with RB1 in competition with E2F1. Residues 69 to 84 (TDSSASTEADSGFSPL) show a composition bias toward low complexity. The tract at residues 69-97 (TDSSASTEADSGFSPLSTPPVSPIPPHPT) is disordered. A compositionally biased stretch (pro residues) spans 85–97 (STPPVSPIPPHPT). Residues 107 to 111 (LLCLE) carry the LXCXE motif, interaction with host RB1 motif. Residues 146–164 (CLRCAFYQEQDDNALCGLC) fold into a zinc finger. Residues 175–232 (SAGAEEEDDEVIFVSAKPGGRKRSAATPCEPDGVSKRPCVPEPEQTEPLDLSLKPRPN) form a disordered region. The PXDLS motif, CTBP-binding signature appears at 222 to 226 (PLDLS). The Nuclear localization signal motif lies at 228–232 (KPRPN).

It belongs to the adenoviridae E1A protein family. In terms of assembly, interacts with host UBE2I; this interaction interferes with polySUMOylation. Interacts with host RB1; this interaction induces the aberrant dissociation of RB1-E2F1 complex thereby disrupting the activity of RB1 and activating E2F1-regulated genes. Interacts with host ATF7; the interaction enhances ATF7-mediated viral transactivation activity which requires the zinc binding domains of both proteins. Isoform early E1A 32 kDa protein and isoform early E1A 26 kDa protein interact (via N-terminus) with CUL1 and E3 ubiquitin ligase RBX1; these interactions inhibit RBX1-CUL1-dependent elongation reaction of ubiquitin chains and attenuate ubiquitination of SCF(FBXW7) target proteins. Interacts (via PXLXP motif) with host ZMYND11/BS69 (via MYND-type zinc finger); this interaction inhibits E1A mediated transactivation. Interacts with host EP300; this interaction stimulates the acetylation of RB1 by recruiting EP300 and RB1 into a multimeric-protein complex. Interacts with host CTBP1 and CTBP2; this interaction seems to potentiate viral replication. Interacts with host DCAF7. Interacts with host DYRK1A. Interacts with host KPNA4; this interaction allows E1A import into the host nucleus. Interacts with host EP400; this interaction stabilizes MYC. Interacts with host TBP protein; this interaction probably disrupts the TBP-TATA complex.

Its subcellular location is the host nucleus. Its function is as follows. Plays a role in viral genome replication by driving entry of quiescent cells into the cell cycle. Stimulation of progression from G1 to S phase allows the virus to efficiently use the cellular DNA replicating machinery to achieve viral genome replication. E1A protein has both transforming and trans-activating activities. Induces the disassembly of the E2F1 transcription factor from RB1 by direct competition for the same binding site on RB1, with subsequent transcriptional activation of E2F1-regulated S-phase genes and of the E2 region of the adenoviral genome. Release of E2F1 leads to the ARF-mediated inhibition of MDM2 and causes TP53/p53 to accumulate because it is not targeted for degradation by MDM2-mediated ubiquitination anymore. This increase in TP53, in turn, would arrest the cell proliferation and direct its death but this effect is counteracted by the viral protein E1B-55K. Inactivation of the ability of RB1 to arrest the cell cycle is critical for cellular transformation, uncontrolled cellular growth and proliferation induced by viral infection. Interaction with RBX1 and CUL1 inhibits ubiquitination of the proteins targeted by SCF(FBXW7) ubiquitin ligase complex, and may be linked to unregulated host cell proliferation. The tumorigenesis-restraining activity of E1A may be related to the disruption of the host CtBP-CtIP complex through the CtBP binding motif. The sequence is that of Early E1A protein from Canine adenovirus serotype 2 (strain Toronto A 26-61) (CAdV-2).